The chain runs to 796 residues: Nuclear GTPase SLIP-GC (796 aa).

Residue 107-114 (GITGAGKS) participates in GTP binding. Coiled-coil stretches lie at residues 158–185 (SDQE…EEAD) and 742–776 (GLCK…LRRS).

It is found in the nucleus speckle. Its function is as follows. Nuclear GTPase found in germinal center B-cells, where it may inhibit function of the activation-induced cytidine deaminase AICDA. Reduces somatic hypermutation in B-cells which may enhance genome stability. This is Nuclear GTPase SLIP-GC from Mus musculus (Mouse).